The following is a 636-amino-acid chain: Chitin synthase VI (636 aa).

4 consecutive transmembrane segments (helical) span residues 23–43 (LQWF…LFCI), 374–394 (TIRT…TTTA), 399–419 (LPVG…LYFG), and 427–447 (IWFY…YMVY). A disordered region spans residues 595 to 636 (QRLRLEQRPRTGPSLNARWQNGPQASETSQGRSQVDDVGIAF). Residues 607 to 627 (PSLNARWQNGPQASETSQGRS) show a composition bias toward polar residues.

The protein belongs to the chitin synthase family. Class VI subfamily. Moderately expressed during appressorium formation.

It is found in the cell membrane. The enzyme catalyses [(1-&gt;4)-N-acetyl-beta-D-glucosaminyl](n) + UDP-N-acetyl-alpha-D-glucosamine = [(1-&gt;4)-N-acetyl-beta-D-glucosaminyl](n+1) + UDP + H(+). Polymerizes chitin, a structural polymer of the cell wall and septum, by transferring the sugar moiety of UDP-GlcNAc to the non-reducing end of the growing chitin polymer. Contributes to the production of conidia but is the only chitine synthase that does not contribute to the ability of fungal conidia to germinate. Involved in fungal stress tolerances. The sequence is that of Chitin synthase VI from Metarhizium acridum (strain CQMa 102).